The sequence spans 325 residues: Aldo-keto reductase family 1 member A1 (325 aa).

At T2 the chain carries N-acetylthreonine. S4 is subject to Phosphoserine. NADP(+) contacts are provided by residues 11–20, T21, and W22; that span reads GQKMPLIGLG. A Phosphoserine modification is found at S38. Residue D45 participates in NADP(+) binding. Y50 acts as the Proton donor in catalysis. K127 carries the post-translational modification N6-acetyllysine; alternate. K127 carries the post-translational modification N6-succinyllysine; alternate. N6-succinyllysine is present on K145. NADP(+)-binding residues include S162, N163, S211, L213, S215, S216, K263, S264, I265, R269, Q272, and N273. Position 211 is a phosphoserine (S211).

Belongs to the aldo/keto reductase family. Monomer. In terms of tissue distribution, widely expressed.

The protein resides in the cytoplasm. It is found in the cytosol. Its subcellular location is the apical cell membrane. The enzyme catalyses a primary alcohol + NADP(+) = an aldehyde + NADPH + H(+). The catalysed reaction is L-gulonate + NADP(+) = aldehydo-D-glucuronate + NADPH + H(+). It catalyses the reaction L-gulono-1,4-lactone + NADP(+) = D-glucurono-3,6-lactone + NADPH + H(+). It carries out the reaction allyl alcohol + NADP(+) = acrolein + NADPH + H(+). The enzyme catalyses glycerol + NADP(+) = D-glyceraldehyde + NADPH + H(+). The catalysed reaction is glycerol + NADP(+) = L-glyceraldehyde + NADPH + H(+). It catalyses the reaction hydroxyacetone + NADP(+) = methylglyoxal + NADPH + H(+). It carries out the reaction 3-deoxyfructose + NADP(+) = 3-deoxyglucosone + NADPH + H(+). The enzyme catalyses (R)-mevalonate + NADP(+) = (R)-mevaldate + NADPH + H(+). The catalysed reaction is pyridine 3-methanol + NADP(+) = pyridine-3-carbaldehyde + NADPH + H(+). It catalyses the reaction S-nitroso-CoA + NADPH + H(+) = sulfinamide-CoA + NADP(+). It carries out the reaction S-nitrosoglutathione + NADPH + H(+) = S-(hydroxysulfenamide)glutathione + NADP(+). Catalyzes the NADPH-dependent reduction of a wide variety of carbonyl-containing compounds to their corresponding alcohols. Displays enzymatic activity towards endogenous metabolites such as aromatic and aliphatic aldehydes, ketones, monosaccharides and bile acids, with a preference for negatively charged substrates, such as glucuronate and succinic semialdehyde. Plays an important role in ascorbic acid biosynthesis by catalyzing the reduction of D-glucuronic acid and D-glucurono-gamma-lactone. Functions as a detoxifiying enzyme by reducing a range of toxic aldehydes. Reduces methylglyoxal and 3-deoxyglucosone, which are present at elevated levels under hyperglycemic conditions and are cytotoxic. Involved in the detoxification of lipid-derived aldehydes like acrolein. Plays a role in the activation of procarcinogens, such as polycyclic aromatic hydrocarbon trans-dihydrodiols, and in the metabolism of various xenobiotics and drugs. Also acts as an inhibitor of protein S-nitrosylation by mediating degradation of S-nitroso-coenzyme A (S-nitroso-CoA), a cofactor required to S-nitrosylate proteins. S-nitroso-CoA reductase activity is involved in reprogramming intermediary metabolism in renal proximal tubules, notably by inhibiting protein S-nitrosylation of isoform 2 of PKM (PKM2). Also acts as a S-nitroso-glutathione reductase by catalyzing the NADPH-dependent reduction of S-nitrosoglutathione. Displays no reductase activity towards retinoids. This Mus musculus (Mouse) protein is Aldo-keto reductase family 1 member A1.